A 185-amino-acid chain; its full sequence is Ribosome-recycling factor (185 aa).

It belongs to the RRF family.

It localises to the cytoplasm. Its function is as follows. Responsible for the release of ribosomes from messenger RNA at the termination of protein biosynthesis. May increase the efficiency of translation by recycling ribosomes from one round of translation to another. The sequence is that of Ribosome-recycling factor from Vibrio vulnificus (strain YJ016).